We begin with the raw amino-acid sequence, 155 residues long: MPKGEGKLIAQNKKAHHDYFIEETYEAGIVLQGTEIKSIRAGKVNLKDSFAKVEKGEVFLHNMHISPYEQGNRYNHDPLRTRKLLLHRREINKLIGYTKEQGYTLVPLKLYIKNGFAKVLLGVGKGKKKYDKREDMKRREAQREIERAFRERQKL.

The protein belongs to the SmpB family.

Its subcellular location is the cytoplasm. Required for rescue of stalled ribosomes mediated by trans-translation. Binds to transfer-messenger RNA (tmRNA), required for stable association of tmRNA with ribosomes. tmRNA and SmpB together mimic tRNA shape, replacing the anticodon stem-loop with SmpB. tmRNA is encoded by the ssrA gene; the 2 termini fold to resemble tRNA(Ala) and it encodes a 'tag peptide', a short internal open reading frame. During trans-translation Ala-aminoacylated tmRNA acts like a tRNA, entering the A-site of stalled ribosomes, displacing the stalled mRNA. The ribosome then switches to translate the ORF on the tmRNA; the nascent peptide is terminated with the 'tag peptide' encoded by the tmRNA and targeted for degradation. The ribosome is freed to recommence translation, which seems to be the essential function of trans-translation. The chain is SsrA-binding protein from Geobacillus sp. (strain WCH70).